The chain runs to 462 residues: MSLRIYNTLSRDVEVFSPLLPGHVRMYVCGMTVYDLCHLGHARAMVAFDVVQRWLKVSGLKVTYVRNVTDIDDKIIKRAVENGETIRSLTDRMVVALHQDADALGIERPTHEPRATDFVPQMLSLIGTLEKKGLAYQTQSGSGQGDVNYAVRKFDGYGKLSGKSLDELRAGERVEVLDGKDDPLDFVLWKSAKPSEPDDAKWDSPYGPGRPGWHIECSAMACELLGESFDIHGGGADLQFPHHENEIAQSEGAFGKPLAGTWMHNGFVRVDNEKMSKSLGNFFTIREILAKYDAETVRFFIIRAHYRSPLNYSDAHLDDARNSLKRLYTALDLVSPAVVAIDWTNPFAARFKAAMDEDFGTPEAVAVLFDLAGEVNKTRSAELAGLLKSLGGCLGLLQSAPGSYLQAGAGLDDASIQRLIAQRADAKKTKNFAEADRIRNDLLGQGIVLKDSPAGTTWEVQS.

Cys-29 provides a ligand contact to Zn(2+). The short motif at Met-31–His-41 is the 'HIGH' region element. Positions 217, 242, and 246 each coordinate Zn(2+). The 'KMSKS' region motif lies at Lys-274–Ser-278. Lys-277 serves as a coordination point for ATP.

It belongs to the class-I aminoacyl-tRNA synthetase family. As to quaternary structure, monomer. The cofactor is Zn(2+).

Its subcellular location is the cytoplasm. The catalysed reaction is tRNA(Cys) + L-cysteine + ATP = L-cysteinyl-tRNA(Cys) + AMP + diphosphate. This Polaromonas sp. (strain JS666 / ATCC BAA-500) protein is Cysteine--tRNA ligase.